We begin with the raw amino-acid sequence, 240 residues long: Probable transcriptional regulatory protein MADE_1004275 (240 aa).

The protein belongs to the TACO1 family.

Its subcellular location is the cytoplasm. The protein is Probable transcriptional regulatory protein MADE_1004275 of Alteromonas mediterranea (strain DSM 17117 / CIP 110805 / LMG 28347 / Deep ecotype).